The sequence spans 177 residues: ATP synthase subunit delta (177 aa).

The protein belongs to the ATPase delta chain family. In terms of assembly, F-type ATPases have 2 components, F(1) - the catalytic core - and F(0) - the membrane proton channel. F(1) has five subunits: alpha(3), beta(3), gamma(1), delta(1), epsilon(1). F(0) has three main subunits: a(1), b(2) and c(10-14). The alpha and beta chains form an alternating ring which encloses part of the gamma chain. F(1) is attached to F(0) by a central stalk formed by the gamma and epsilon chains, while a peripheral stalk is formed by the delta and b chains.

The protein localises to the cell inner membrane. Its function is as follows. F(1)F(0) ATP synthase produces ATP from ADP in the presence of a proton or sodium gradient. F-type ATPases consist of two structural domains, F(1) containing the extramembraneous catalytic core and F(0) containing the membrane proton channel, linked together by a central stalk and a peripheral stalk. During catalysis, ATP synthesis in the catalytic domain of F(1) is coupled via a rotary mechanism of the central stalk subunits to proton translocation. In terms of biological role, this protein is part of the stalk that links CF(0) to CF(1). It either transmits conformational changes from CF(0) to CF(1) or is implicated in proton conduction. This chain is ATP synthase subunit delta, found in Flavobacterium johnsoniae (strain ATCC 17061 / DSM 2064 / JCM 8514 / BCRC 14874 / CCUG 350202 / NBRC 14942 / NCIMB 11054 / UW101) (Cytophaga johnsonae).